Consider the following 294-residue polypeptide: tRNA-uridine aminocarboxypropyltransferase 1 (294 aa).

The disordered stretch occupies residues 158–185 (DMQNDSSCEPSLKRPKCSQQYDKSKNEG). A DXTW motif is present at residues 202 to 205 (DSTW).

It belongs to the TDD superfamily. DTWD1 family.

It is found in the nucleus. It carries out the reaction a uridine in tRNA + S-adenosyl-L-methionine = a 3-[(3S)-3-amino-3-carboxypropyl]uridine in tRNA + S-methyl-5'-thioadenosine + H(+). Functionally, catalyzes the formation of 3-(3-amino-3-carboxypropyl)uridine (acp3U) at position 20 in the D-loop of several cytoplasmic tRNAs (acp3U(20)). The sequence is that of tRNA-uridine aminocarboxypropyltransferase 1 from Xenopus tropicalis (Western clawed frog).